The primary structure comprises 413 residues: THAP domain-containing protein 5 (413 aa).

The THAP-type zinc finger occupies 1 to 85 (MPRYCAASYC…LKHTAVPTIF (85 aa)). The disordered stretch occupies residues 84–118 (IFSSPDDEEKGSSQNSPQEIRREDQEETTKNVESK). The segment covering 102-118 (EIRREDQEETTKNVESK) has biased composition (basic and acidic residues). Residues 375–399 (RLRSLEALIGQLKQENLLSEEKLKI) are a coiled coil.

Its subcellular location is the nucleus. The chain is THAP domain-containing protein 5 (THAP5) from Gallus gallus (Chicken).